Consider the following 141-residue polypeptide: NTDQSFPGFPGSEMWNPNTDLSEDCLYLNVWIPTPKPKNATVMIWIYGGGFQTGTSSLPVYDGKFLARVERVIVVSVNYRVGALGFLALPGNPEAPGNLGLFDQQLALQWVQKNIAAFGGNPKSVTLFGESAGAGSVGLHL.

N39 carries an N-linked (GlcNAc...) asparagine glycan. 49–50 (GG) is a binding site for substrate. S131 (acyl-ester intermediate) is an active-site residue. A Phosphoserine modification is found at S131.

This sequence belongs to the type-B carboxylesterase/lipase family. In terms of assembly, homotetramer; disulfide-linked. Dimer of dimers. As to expression, present in most cells except erythrocytes.

It localises to the secreted. It carries out the reaction an acylcholine + H2O = a carboxylate + choline + H(+). In terms of biological role, esterase with broad substrate specificity. Contributes to the inactivation of the neurotransmitter acetylcholine. Can degrade neurotoxic organophosphate esters. This Canis lupus familiaris (Dog) protein is Cholinesterase (BCHE).